Consider the following 576-residue polypeptide: 60 kDa heat shock protein homolog 2, mitochondrial (576 aa).

The transit peptide at 1 to 61 (MMRMFRYTNT…AVTMGPKGRN (61 aa)) directs the protein to the mitochondrion.

This sequence belongs to the chaperonin (HSP60) family. As to expression, first detectable expression is seen in the posterior part of the dorsal tracheal trunk at stage 14-15, which marks the beginning of terminal tracheation. In the larval gut, expression in proventriculus is stronger than in midgut and hindgut. Malpighian tubules shows low expression and late third instar larval imaginal disks and brain showed moderate expression. In larval ovary and testis, expression is strong in the posterior region.

It is found in the mitochondrion matrix. Its function is as follows. Prevents misfolding and promotes the refolding and proper assembly of unfolded polypeptides generated under stress conditions. Essential for proper development of trachea, spermatogonia and spermatocytes. This is 60 kDa heat shock protein homolog 2, mitochondrial (Hsp60C) from Drosophila melanogaster (Fruit fly).